The sequence spans 289 residues: Protease HtpX (289 aa).

2 consecutive transmembrane segments (helical) span residues 5 to 25 (IVLFAITNIAVLILASIVMSL) and 33 to 53 (MSGLLVMALILGFGGSLISLL). His-140 contributes to the Zn(2+) binding site. Glu-141 is a catalytic residue. Residue His-144 coordinates Zn(2+). A run of 2 helical transmembrane segments spans residues 155–175 (LLQGVLNTFVIVLARVVGGFI) and 193–213 (GIVLVLELLFGLFATIITMWF). Glu-218 lines the Zn(2+) pocket.

It belongs to the peptidase M48B family. Zn(2+) is required as a cofactor.

The protein localises to the cell inner membrane. The sequence is that of Protease HtpX from Xylella fastidiosa (strain M23).